The chain runs to 281 residues: Pantothenate synthetase (281 aa).

Residue 30–37 (MGYLHEGH) coordinates ATP. H37 functions as the Proton donor in the catalytic mechanism. Position 61 (Q61) interacts with (R)-pantoate. Q61 lines the beta-alanine pocket. 147-150 (GQKD) serves as a coordination point for ATP. Q153 is a (R)-pantoate binding site. Residues V176 and 184–187 (MSSR) each bind ATP.

This sequence belongs to the pantothenate synthetase family. As to quaternary structure, homodimer.

It is found in the cytoplasm. The catalysed reaction is (R)-pantoate + beta-alanine + ATP = (R)-pantothenate + AMP + diphosphate + H(+). It participates in cofactor biosynthesis; (R)-pantothenate biosynthesis; (R)-pantothenate from (R)-pantoate and beta-alanine: step 1/1. Functionally, catalyzes the condensation of pantoate with beta-alanine in an ATP-dependent reaction via a pantoyl-adenylate intermediate. In Heliobacterium modesticaldum (strain ATCC 51547 / Ice1), this protein is Pantothenate synthetase.